Here is a 1312-residue protein sequence, read N- to C-terminus: Angiotensin-converting enzyme (1312 aa).

Positions 1 to 34 (MGAASGQRGRWPLSPPLLMLSLLVLLLQPSPAPA) are cleaved as a signal peptide. Over 35–1264 (LDPGLQPGNF…LEPQQARVGQ (1230 aa)) the chain is Extracellular. Peptidase M2 domains lie at 45-629 (SPDE…LGWP) and 648-1227 (ETDE…LGWP). Asn-59, Asn-79, Asn-116, Asn-151, and Asn-165 each carry an N-linked (GlcNAc...) asparagine glycan. The cysteines at positions 162 and 170 are disulfide-linked. Residue Tyr-236 coordinates chloride. N-linked (GlcNAc...) asparagine glycosylation occurs at Asn-323. A disulfide bridge connects residues Cys-364 and Cys-382. Zn(2+) is bound at residue His-395. Glu-396 serves as the catalytic Proton acceptor 1. 2 residues coordinate Zn(2+): His-399 and Glu-423. Asn-514 carries an N-linked (GlcNAc...) asparagine glycan. The active-site Proton donor 1 is the His-525. Arg-534 lines the chloride pocket. Cys-550 and Cys-562 form a disulfide bridge. The N-linked (GlcNAc...) asparagine glycan is linked to Asn-682. 2 N-linked (GlcNAc...) (complex) asparagine glycosylation sites follow: Asn-700 and Asn-719. Cys-762 and Cys-768 are joined by a disulfide. An N-linked (GlcNAc...) asparagine glycan is attached at Asn-765. Residues Arg-796 and Tyr-834 each coordinate chloride. N-linked (GlcNAc...) asparagine glycosylation is present at Asn-947. Cys-962 and Cys-980 are joined by a disulfide. His-993 lines the Zn(2+) pocket. The active-site Proton acceptor 2 is Glu-994. Zn(2+) is bound by residues His-997 and Glu-1021. Chloride is bound by residues Trp-1095 and Arg-1099. The active-site Proton donor 2 is the His-1123. Residue Arg-1132 participates in chloride binding. Cys-1148 and Cys-1160 are joined by a disulfide. Asn-1196 is a glycosylation site (N-linked (GlcNAc...) asparagine). Positions 1220-1261 (HGETLGWPEYNWAPNTARAEGSTAESNRVNFLGLYLEPQQAR) are juxtamembrane stalk. A helical transmembrane segment spans residues 1265 to 1281 (WVLLFLGVALLVATVGL). Residues 1282–1312 (AHRLYNIRNHHSLRRPHRGPQFGSEVELRHS) lie on the Cytoplasmic side of the membrane. Residue Ser-1305 is modified to Phosphoserine.

This sequence belongs to the peptidase M2 family. As to quaternary structure, monomer and homodimer; homodimerizes following binding to an inhibitor. Interacts with calmodulin (CALM1, CALM2 or CALM3); interaction takes place in the cytoplasmic region and regulates phosphorylation and proteolytic cleavage. Requires Zn(2+) as cofactor. The cofactor is chloride. Post-translationally, produced following proteolytic cleavage by secretase enzymes that cleave the transmembrane form in the juxtamembrane stalk region upstream of the transmembrane region. Cleavage can take place at different sites of the juxtamembrane stalk region. In terms of processing, phosphorylated by CK2 on Ser-1305; which allows membrane retention. Phosphorylated on tyrosine residues on its extracellular part, promoting cleavage by secretase enzymes and formation of the soluble form (Angiotensin-converting enzyme, soluble form). Highly expressed in kidney and lung; not expressed in the liver. In the brain, expressed in the cerebral cortex, hippocampus, cerebellum and basal ganglia/brainstem. Highly expressed in dopamine receptor DRD1-expressing neurons in the dorsal striatum and the nucleus accumbens of the brain. As to expression, specifically expressed in spermatocytes, adult testis.

The protein resides in the cell membrane. The protein localises to the cytoplasm. Its subcellular location is the secreted. The enzyme catalyses Release of a C-terminal dipeptide, oligopeptide-|-Xaa-Yaa, when Xaa is not Pro, and Yaa is neither Asp nor Glu. Thus, conversion of angiotensin I to angiotensin II, with increase in vasoconstrictor activity, but no action on angiotensin II.. It carries out the reaction angiotensin I + H2O = L-histidyl-L-leucine + angiotensin II. The catalysed reaction is bradykinin + H2O = L-Phe-L-Arg + bradykinin(1-7). It catalyses the reaction substance P + H2O = substance P(1-9) + L-Leu-L-Met-NH2. The enzyme catalyses substance P + H2O = substance P(1-8) + Gly-L-Leu-L-Met-NH2. It carries out the reaction substance P + H2O = L-Phe-L-Phe-Gly-L-Leu-L-Met-NH2 + substance P(1-6). The catalysed reaction is neurotensin + H2O = neurotensin(1-11) + L-isoleucyl-L-leucine. It catalyses the reaction goralatide + H2O = N-acetyl-L-seryl-L-aspartate + L-lysyl-L-proline. The enzyme catalyses Met-enkephalin + H2O = L-phenylalanyl-L-methionine + L-tyrosylglycylglycine. It carries out the reaction Leu-enkephalin + H2O = L-tyrosylglycylglycine + L-phenylalanyl-L-leucine. The catalysed reaction is Met-enkephalin-Arg-Phe + H2O = L-arginyl-L-phenylalanine + Met-enkephalin. The dipeptidyl carboxypeptidase activity is specifically inhibited by lisinopril, captopril and enalaprilat. The N-terminal catalytic domain, but not the C-terminal catalytic domain, is specifically inhibited by the phosphinic peptide RXP 407. With respect to regulation, the putative GPIase activity is nearly insensitive to captopril. Functionally, dipeptidyl carboxypeptidase that removes dipeptides from the C-terminus of a variety of circulating hormones, such as angiotensin I, bradykinin or enkephalins, thereby playing a key role in the regulation of blood pressure, electrolyte homeostasis or synaptic plasticity. Composed of two similar catalytic domains, each possessing a functional active site, with different selectivity for substrates. Plays a major role in the angiotensin-renin system that regulates blood pressure and sodium retention by the kidney by converting angiotensin I to angiotensin II, resulting in an increase of the vasoconstrictor activity of angiotensin. Also able to inactivate bradykinin, a potent vasodilator, and therefore enhance the blood pressure response. Acts as a regulator of synaptic transmission by mediating cleavage of neuropeptide hormones, such as substance P, neurotensin or enkephalins. Catalyzes degradation of different enkephalin neuropeptides (Met-enkephalin, Leu-enkephalin, Met-enkephalin-Arg-Phe and possibly Met-enkephalin-Arg-Gly-Leu). Acts as a regulator of synaptic plasticity in the nucleus accumbens of the brain by mediating cleavage of Met-enkephalin-Arg-Phe, a strong ligand of Mu-type opioid receptor OPRM1, into Met-enkephalin. Met-enkephalin-Arg-Phe cleavage by ACE decreases activation of OPRM1, leading to long-term synaptic potentiation of glutamate release. Also acts as a regulator of hematopoietic stem cell differentiation by mediating degradation of hemoregulatory peptide N-acetyl-SDKP (AcSDKP). Acts as a regulator of cannabinoid signaling pathway by mediating degradation of hemopressin, an antagonist peptide of the cannabinoid receptor CNR1. Involved in amyloid-beta metabolism by catalyzing degradation of Amyloid-beta protein 40 and Amyloid-beta protein 42 peptides, thereby preventing plaque formation. Catalyzes cleavage of cholecystokinin (maturation of Cholecystokinin-8 and Cholecystokinin-5) and Gonadoliberin-1 (both maturation and degradation) hormones. Degradation of hemoregulatory peptide N-acetyl-SDKP (AcSDKP) and amyloid-beta proteins is mediated by the N-terminal catalytic domain, while angiotensin I and cholecystokinin cleavage is mediated by the C-terminal catalytic region. Soluble form that is released in blood plasma and other body fluids following proteolytic cleavage in the juxtamembrane stalk region. Its function is as follows. Isoform produced by alternative promoter usage that is specifically expressed in spermatocytes and adult testis, and which is required for male fertility. In contrast to somatic isoforms, only contains one catalytic domain. Acts as a dipeptidyl carboxypeptidase that removes dipeptides from the C-terminus of substrates. The identity of substrates that are needed for male fertility is unknown. Isoform Testis-specific and isoform Somatic have distinct activities and cannot completely compensate for the loss of the other when expressed in somatic tissues or testis. May also have a glycosidase activity which releases GPI-anchored proteins from the membrane by cleaving the mannose linkage in the GPI moiety. The GPIase activity was reported to be essential for the egg-binding ability of the sperm. This activity is however unclear and has been challenged by other groups, suggesting that it may be indirect. The chain is Angiotensin-converting enzyme from Mus musculus (Mouse).